A 341-amino-acid polypeptide reads, in one-letter code: Probable long-chain-alcohol O-fatty-acyltransferase 9 (341 aa).

A run of 7 helical transmembrane segments spans residues 9 to 29 (IIVWISAIISVSYCYYISANI), 36 to 56 (LFSVLPICGLFFVLPLFFSSV), 82 to 102 (GPLFPVAPNLIQFVCFTCFPI), 122 to 142 (FAIKIMIFGVVLHVYNYSHFL), 146 to 166 (VLLSLCFLHLYVELEILLGPL), 231 to 251 (MGYLVTFLVSGLFHELVYFYI), and 295 to 315 (RLLTMGFVVVTGGLLFFPLFI).

This sequence belongs to the wax synthase family.

The protein localises to the membrane. The catalysed reaction is a long chain fatty alcohol + a fatty acyl-CoA = a wax ester + CoA. Its function is as follows. Catalyzes the final step in the synthesis of long-chain linear esters (waxes). The chain is Probable long-chain-alcohol O-fatty-acyltransferase 9 from Arabidopsis thaliana (Mouse-ear cress).